A 316-amino-acid chain; its full sequence is tRNA dimethylallyltransferase (316 aa).

17-24 (GPTASGKT) contacts ATP. Position 19–24 (19–24 (TASGKT)) interacts with substrate. 4 interaction with substrate tRNA regions span residues 42–45 (DSAL), 166–170 (QRLSR), 247–252 (RCVGYR), and 280–287 (KRQITWLR).

This sequence belongs to the IPP transferase family. Monomer. Requires Mg(2+) as cofactor.

The enzyme catalyses adenosine(37) in tRNA + dimethylallyl diphosphate = N(6)-dimethylallyladenosine(37) in tRNA + diphosphate. Catalyzes the transfer of a dimethylallyl group onto the adenine at position 37 in tRNAs that read codons beginning with uridine, leading to the formation of N6-(dimethylallyl)adenosine (i(6)A). In Escherichia fergusonii (strain ATCC 35469 / DSM 13698 / CCUG 18766 / IAM 14443 / JCM 21226 / LMG 7866 / NBRC 102419 / NCTC 12128 / CDC 0568-73), this protein is tRNA dimethylallyltransferase.